We begin with the raw amino-acid sequence, 119 residues long: Large ribosomal subunit protein bL20 (119 aa).

This sequence belongs to the bacterial ribosomal protein bL20 family.

Binds directly to 23S ribosomal RNA and is necessary for the in vitro assembly process of the 50S ribosomal subunit. It is not involved in the protein synthesizing functions of that subunit. The sequence is that of Large ribosomal subunit protein bL20 from Caldicellulosiruptor bescii (strain ATCC BAA-1888 / DSM 6725 / KCTC 15123 / Z-1320) (Anaerocellum thermophilum).